The primary structure comprises 383 residues: Agmatine deiminase (383 aa).

The agmatine site is built by D220 and D226. Catalysis depends on C366, which acts as the Amidino-cysteine intermediate.

Belongs to the agmatine deiminase family. In terms of assembly, forms homodimers.

It carries out the reaction agmatine + H2O = N-carbamoylputrescine + NH4(+). It participates in amine and polyamine biosynthesis; putrescine biosynthesis via agmatine pathway; N-carbamoylputrescine from agmatine: step 1/1. Its activity is regulated as follows. Inhibited by N-ethylmaleimide and iodoacetamide. Its function is as follows. Mediates the hydrolysis of agmatine into N-carbamoylputrescine in the arginine decarboxylase (ADC) pathway of putrescine biosynthesis, a basic polyamine. The sequence is that of Agmatine deiminase (AIH) from Arabidopsis thaliana (Mouse-ear cress).